The following is an 817-amino-acid chain: MAVSLDDDVPLILTLDEAESAPLPPSNSLGQEQLPSKNGGSHSIHNSQVPSLVSGADSPPSSPTGHNWEMNYQEAAIYLQEGQNNDKFFTHPKDARALAAYLFVHNHFFYMMELLTALLLLLLSLCESPAVPVLKLHTYVHATLELFALMVVVFELCMKLRWLGFHTFVRHKRTMVKTSVLVVQFIEAIVVLVRQTSHVRVTRALRCIFLVDCRYCGGVRRNLRQIFQSLPPFMDILLLLLFFMIIFAILGFYLFSTNPSDPYFSTLENSIVNLFVLLTTANFPDVMMPSYSRNPWSCVFFIVYLSIELYFIMNLLLAVVFDTFNDIEKHKFKSLLLHKRTAIQHAYGLLASQRRPAGISYRQFEGLMRFYKPRMSARERFLTFKALNQSNTPLLSLKDFYDIYEVAALQWKAKRNRQHWFDELPRTAFLIFKGINILVNSKAFQYFMYLVVAVNGVWILVETFMLKGGNFTSKHVPWSYLVFLTIYGVELFMKVAGLGPVEYLSSGWNLFDFSVTAFAFLGLLALTLNMEPFYFIVVLRPLQLLRLFKLKKRYRNVLDTMFELLPRMASLGLTLLTFYYSFAIVGMEFFNGRLTPNCCNTSTVADAYRFINHTVGNKTKVEEGYYYLNNFDNILNSFVTLFELTVVNNWYIIMEGVTSQTSHWSRLYFMTFYIVTMVVMTIIVAFILEAFVFRMNYSRKSQDSEVDSGIVIEKEMSKEELMAVLELYREERGTSSDVTRLLDTLSQMEKYQQNSMVFLGRRSRTKSDLSLKMYQEEIQEWYEEHAREQEQQKLRGSVPGPAAQQPPGSRQRSQTVT.

Residues 1-113 are Cytoplasmic-facing; sequence MAVSLDDDVP…VHNHFFYMME (113 aa). The segment at 20 to 65 is disordered; it reads SAPLPPSNSLGQEQLPSKNGGSHSIHNSQVPSLVSGADSPPSSPTG. Polar residues predominate over residues 26–51; it reads SNSLGQEQLPSKNGGSHSIHNSQVPS. Residues 114–134 traverse the membrane as a helical segment; the sequence is LLTALLLLLLSLCESPAVPVL. Residues 135 to 137 lie on the Extracellular side of the membrane; it reads KLH. A helical transmembrane segment spans residues 138–158; sequence TYVHATLELFALMVVVFELCM. Over 159–172 the chain is Cytoplasmic; that stretch reads KLRWLGFHTFVRHK. The chain crosses the membrane as a helical span at residues 173–193; it reads RTMVKTSVLVVQFIEAIVVLV. Residues 194-202 lie on the Extracellular side of the membrane; that stretch reads RQTSHVRVT. Residues 203-221 form a helical membrane-spanning segment; it reads RALRCIFLVDCRYCGGVRR. The Cytoplasmic segment spans residues 222–235; it reads NLRQIFQSLPPFMD. The helical transmembrane segment at 236–256 threads the bilayer; it reads ILLLLLFFMIIFAILGFYLFS. Residues 257–263 lie on the Extracellular side of the membrane; the sequence is TNPSDPY. The segment at residues 264–287 is an intramembrane region (helical; Pore-forming); that stretch reads FSTLENSIVNLFVLLTTANFPDVM. Residues 288–298 lie on the Extracellular side of the membrane; sequence MPSYSRNPWSC. A helical membrane pass occupies residues 299 to 319; sequence VFFIVYLSIELYFIMNLLLAV. Residues 320–445 are Cytoplasmic-facing; sequence VFDTFNDIEK…NILVNSKAFQ (126 aa). A helical transmembrane segment spans residues 446–466; it reads YFMYLVVAVNGVWILVETFML. Residues 467–480 are Extracellular-facing; that stretch reads KGGNFTSKHVPWSY. Asparagine 470 carries an N-linked (GlcNAc...) asparagine glycan. Residues 481-501 form a helical membrane-spanning segment; sequence LVFLTIYGVELFMKVAGLGPV. Residues 502–504 lie on the Cytoplasmic side of the membrane; that stretch reads EYL. A helical membrane pass occupies residues 505–527; the sequence is SSGWNLFDFSVTAFAFLGLLALT. At 528–535 the chain is on the extracellular side; the sequence is LNMEPFYF. The helical transmembrane segment at 536–550 threads the bilayer; it reads IVVLRPLQLLRLFKL. Over 551–569 the chain is Cytoplasmic; that stretch reads KKRYRNVLDTMFELLPRMA. Residues 570 to 590 traverse the membrane as a helical segment; sequence SLGLTLLTFYYSFAIVGMEFF. Over 591–630 the chain is Extracellular; that stretch reads NGRLTPNCCNTSTVADAYRFINHTVGNKTKVEEGYYYLNN. Positions 631–654 form an intramembrane region, helical; Pore-forming; the sequence is FDNILNSFVTLFELTVVNNWYIIM. The Extracellular portion of the chain corresponds to 655-671; the sequence is EGVTSQTSHWSRLYFMT. A helical transmembrane segment spans residues 672-692; sequence FYIVTMVVMTIIVAFILEAFV. The Cytoplasmic segment spans residues 693-817; that stretch reads FRMNYSRKSQ…GSRQRSQTVT (125 aa). A coiled-coil region spans residues 770 to 794; sequence SLKMYQEEIQEWYEEHAREQEQQKL. A disordered region spans residues 785-817; that stretch reads HAREQEQQKLRGSVPGPAAQQPPGSRQRSQTVT. A compositionally biased stretch (polar residues) spans 806-817; the sequence is PPGSRQRSQTVT.

This sequence belongs to the calcium channel alpha-1 subunit (TC 1.A.1.11) family. Two pore calcium channel subfamily. Dimer. Interacts with MTOR; the interaction is required for TPCN1 ATP sensitivity. Interacts with STX7, STX8 and STX12. Interacts with JPT2. Found in a complex with LSM12, TPCN1 and TPCN2. Post-translationally, N-glycosylated. Mainly expressed in epithelial tissues like lung, kidney, colon, spleen and liver (at protein level).

Its subcellular location is the lysosome membrane. The protein localises to the endosome membrane. It is found in the early endosome membrane. It localises to the recycling endosome membrane. It catalyses the reaction Na(+)(in) = Na(+)(out). The enzyme catalyses Ca(2+)(in) = Ca(2+)(out). Its activity is regulated as follows. Na(+) current is inhibited by ATP in a MTORC-dependent manner. ATP sensitivity is independent of PI(3,5)P2. Probably regulated by Mg(2+) ions, cytosolic Mg(2+) selectively inhibits outward current while lysosomal Mg(2+) modestly inhibits both the outward and inward currents. In the absence of Mg(2+), NAADP readily activates TPCN2, with properties similar to PI(3,5)P2. Both current elicited by PI(3,5)P2 as well as NAADP are inhibited by tetrandrine. In terms of biological role, intracellular channel initially characterized as a non-selective Ca(2+)-permeable channel activated by NAADP (nicotinic acid adenine dinucleotide phosphate), it is also a voltage-gated highly-selective Na(+) channel activated directly by PI(3,5)P2 (phosphatidylinositol 3,5-bisphosphate) that senses pH changes and confers electrical excitability to organelles. Localizes to the early and recycling endosomes membranes where it plays a role in the uptake and processing of proteins and regulates organellar membrane excitability, membrane trafficking and pH homeostasis. Ion selectivity is not fixed but rather agonist-dependent and under defined ionic conditions, can be readily activated by both NAADP and PI(3,5)P2. Required for mTOR-dependent nutrient sensing. In Mus musculus (Mouse), this protein is Two pore calcium channel protein 1.